The following is an 874-amino-acid chain: Cellulose synthase catalytic subunit [UDP-forming] (874 aa).

4 consecutive transmembrane segments (helical) span residues S30–L50, I151–F171, P173–M193, and L230–G250. A catalytic subdomain A region spans residues Q271–V364. D313 is an active-site residue. Positions 360 and 362 each coordinate substrate. The tract at residues K441–M501 is catalytic subdomain B. D457 is a catalytic residue. The next 5 membrane-spanning stretches (helical) occupy residues L525–L545, F547–I567, I592–P612, V634–V654, and V668–V688. In terms of domain architecture, PilZ spans Q694–F790. The helical transmembrane segment at S833–P853 threads the bilayer.

Belongs to the glycosyltransferase 2 family. It depends on Mg(2+) as a cofactor.

The protein resides in the cell inner membrane. The enzyme catalyses [(1-&gt;4)-beta-D-glucosyl](n) + UDP-alpha-D-glucose = [(1-&gt;4)-beta-D-glucosyl](n+1) + UDP + H(+). It functions in the pathway glycan metabolism; bacterial cellulose biosynthesis. With respect to regulation, activated by bis-(3'-5') cyclic diguanylic acid (c-di-GMP). In terms of biological role, catalytic subunit of cellulose synthase. It polymerizes uridine 5'-diphosphate glucose to cellulose, which is produced as an extracellular component for mechanical and chemical protection at the onset of the stationary phase, when the cells exhibit multicellular behavior (rdar morphotype). Coexpression of cellulose and thin aggregative fimbriae leads to a hydrophobic network with tightly packed cells embedded in a highly inert matrix. The polypeptide is Cellulose synthase catalytic subunit [UDP-forming] (bcsA) (Salmonella typhimurium (strain LT2 / SGSC1412 / ATCC 700720)).